Reading from the N-terminus, the 163-residue chain is Protein FAM167B (163 aa).

A coiled-coil region spans residues F73 to E132.

Belongs to the FAM167 (SEC) family.

The polypeptide is Protein FAM167B (FAM167B) (Homo sapiens (Human)).